The chain runs to 307 residues: MSRKVLLVGDGAVGSNFANDLLQTTQVDELVICDLNKDRAAGDCLDLEDMTYFTGQTKLRAGDYSDAADADVVVITAGVPRKPGESRLDLIKKNEAILRSIVDPVVASGFSGIFVVSANPVDILTTLTQKLSGFPKKRVIGTGTSLDSARLRVELAKRLQVPIESVNAWVLGEHGDSSFENFSSAVVNGKPLLDYPGMTEAALDEIEAHVREKGSEIIVKKGATYYGVAMMLAKIVTAILENNDLALPLSAPLHGEYGIKDEIYLGTLAIINGQGISHVLELPLNDSELAKMRASAATIKATLDSLG.

Residues V13, D34, R39, Y64, and 78-79 (GV) each bind NAD(+). A substrate-binding site is contributed by R87. An NAD(+)-binding site is contributed by S100. Position 119–122 (119–122 (NPVD)) interacts with substrate. An NAD(+)-binding site is contributed by T142. Residue 147 to 150 (DSAR) coordinates substrate. The active-site Proton acceptor is the H174. T224 provides a ligand contact to substrate.

It belongs to the LDH/MDH superfamily. LDH family. In terms of assembly, homotetramer.

The protein resides in the cytoplasm. It carries out the reaction (S)-lactate + NAD(+) = pyruvate + NADH + H(+). Its pathway is fermentation; pyruvate fermentation to lactate; (S)-lactate from pyruvate: step 1/1. In terms of biological role, catalyzes the conversion of lactate to pyruvate. This Lactobacillus delbrueckii subsp. bulgaricus (strain ATCC BAA-365 / Lb-18) protein is L-lactate dehydrogenase.